The chain runs to 488 residues: MDSIELIPGLPGPGRRLLQLLKDLPSNPSVIVREIPDAIDAFRESITPATRPSCLGLLDTILSCFELPIPTEPIMKALGKLLEPMSWADLKKFGIESYLVTGLEHPSTDVEIFCLHLIRRANWEKKEIGEPLFEAIMACINSRSIAVSEEATVLLFDMADFPYYFNLIIKRFTFVDYEIMNSTLRVRWLTLFAKLSTKSPEYLEELIKDDKLVINGDNKDILLQINFVDVLGIMLEAPFTYEYISSEKTKYLDTIAQDYKGSADSYTDHIGLKFLPRLCELHPDAINSLDEKHQLFDAVRERMKTNDATSILLYGVFLSNTVVTQALIKKYGIEDEANRYVPRWLTRRFLMDEPGMSSFAHALLQPDHNLWMQLWRILPPNTLSTLVNTASSPIPRSRQLAYQCLLHIAQNSPIQIASEGFAIRHLLEAEGDHETCLLRFQVLKTMMESPHGGPKLPFGRYREDILKRLQQGPIVSGASTLKVAAETA.

It is found in the cytoplasm. It localises to the nucleus. This is an uncharacterized protein from Schizosaccharomyces pombe (strain 972 / ATCC 24843) (Fission yeast).